The following is an 807-amino-acid chain: DNA gyrase subunit B (807 aa).

The Toprim domain occupies 429–543 (SELFIVEGDS…KGYLYIAQPP (115 aa)). 3 residues coordinate Mg(2+): glutamate 435, aspartate 508, and aspartate 510.

Belongs to the type II topoisomerase GyrB family. In terms of assembly, heterotetramer, composed of two GyrA and two GyrB chains. In the heterotetramer, GyrA contains the active site tyrosine that forms a transient covalent intermediate with DNA, while GyrB binds cofactors and catalyzes ATP hydrolysis. Requires Mg(2+) as cofactor. It depends on Mn(2+) as a cofactor. Ca(2+) is required as a cofactor.

It is found in the cytoplasm. It carries out the reaction ATP-dependent breakage, passage and rejoining of double-stranded DNA.. Its function is as follows. A type II topoisomerase that negatively supercoils closed circular double-stranded (ds) DNA in an ATP-dependent manner to modulate DNA topology and maintain chromosomes in an underwound state. Negative supercoiling favors strand separation, and DNA replication, transcription, recombination and repair, all of which involve strand separation. Also able to catalyze the interconversion of other topological isomers of dsDNA rings, including catenanes and knotted rings. Type II topoisomerases break and join 2 DNA strands simultaneously in an ATP-dependent manner. The protein is DNA gyrase subunit B of Rickettsia prowazekii (strain Madrid E).